A 380-amino-acid chain; its full sequence is Chaperone protein DnaJ 2 (380 aa).

The region spanning 10 to 75 (DYYKILGVSK…KKRKEYDQAR (66 aa)) is the J domain. The segment covering 32–56 (KIARDNHPDSHPGDKAAEARFKEAS) has biased composition (basic and acidic residues). The disordered stretch occupies residues 32 to 63 (KIARDNHPDSHPGDKAAEARFKEASEANDVLS). The CR-type zinc finger occupies 151–230 (GTTVTMDMVS…CHGSGRAKST (80 aa)). Cys164, Cys167, Cys181, Cys184, Cys204, Cys207, Cys218, and Cys221 together coordinate Zn(2+). CXXCXGXG motif repeat units lie at residues 164 to 171 (CQACRGTG), 181 to 188 (CSTCQGSG), 204 to 211 (CPDCHGRG), and 218 to 225 (CQVCHGSG).

Belongs to the DnaJ family. As to quaternary structure, homodimer. Requires Zn(2+) as cofactor.

Its subcellular location is the cytoplasm. In terms of biological role, participates actively in the response to hyperosmotic and heat shock by preventing the aggregation of stress-denatured proteins and by disaggregating proteins, also in an autonomous, DnaK-independent fashion. Unfolded proteins bind initially to DnaJ; upon interaction with the DnaJ-bound protein, DnaK hydrolyzes its bound ATP, resulting in the formation of a stable complex. GrpE releases ADP from DnaK; ATP binding to DnaK triggers the release of the substrate protein, thus completing the reaction cycle. Several rounds of ATP-dependent interactions between DnaJ, DnaK and GrpE are required for fully efficient folding. Also involved, together with DnaK and GrpE, in the DNA replication of plasmids through activation of initiation proteins. The sequence is that of Chaperone protein DnaJ 2 from Cutibacterium acnes (strain DSM 16379 / KPA171202) (Propionibacterium acnes).